A 303-amino-acid polypeptide reads, in one-letter code: UDP-3-O-acyl-N-acetylglucosamine deacetylase (303 aa).

Zn(2+)-binding residues include H78, H237, and D241. The Proton donor role is filled by H264.

The protein belongs to the LpxC family. Requires Zn(2+) as cofactor.

The catalysed reaction is a UDP-3-O-[(3R)-3-hydroxyacyl]-N-acetyl-alpha-D-glucosamine + H2O = a UDP-3-O-[(3R)-3-hydroxyacyl]-alpha-D-glucosamine + acetate. It functions in the pathway glycolipid biosynthesis; lipid IV(A) biosynthesis; lipid IV(A) from (3R)-3-hydroxytetradecanoyl-[acyl-carrier-protein] and UDP-N-acetyl-alpha-D-glucosamine: step 2/6. In terms of biological role, catalyzes the hydrolysis of UDP-3-O-myristoyl-N-acetylglucosamine to form UDP-3-O-myristoylglucosamine and acetate, the committed step in lipid A biosynthesis. In Xanthomonas axonopodis pv. citri (strain 306), this protein is UDP-3-O-acyl-N-acetylglucosamine deacetylase.